A 38-amino-acid chain; its full sequence is Large ribosomal subunit protein bL36 (38 aa).

It belongs to the bacterial ribosomal protein bL36 family.

This Stutzerimonas stutzeri (strain A1501) (Pseudomonas stutzeri) protein is Large ribosomal subunit protein bL36.